A 585-amino-acid chain; its full sequence is Protein FAM151A (585 aa).

The chain crosses the membrane as a helical span at residues 14 to 34 (WVFAGITCVSVVVIAAIVLAI).

This sequence belongs to the menorin family.

Its subcellular location is the membrane. The protein is Protein FAM151A (FAM151A) of Homo sapiens (Human).